The following is a 335-amino-acid chain: Rho guanine nucleotide exchange factor 39 (335 aa).

Positions lysine 22–isoleucine 197 constitute a DH domain. In terms of domain architecture, PH spans tryptophan 227–serine 331.

Its subcellular location is the cell membrane. Promotes cell proliferation. The chain is Rho guanine nucleotide exchange factor 39 (ARHGEF39) from Bos taurus (Bovine).